Here is a 751-residue protein sequence, read N- to C-terminus: Valine--tRNA ligase (751 aa).

K520 contacts ATP.

Belongs to the class-I aminoacyl-tRNA synthetase family. ValS type 2 subfamily.

The protein resides in the cytoplasm. It carries out the reaction tRNA(Val) + L-valine + ATP = L-valyl-tRNA(Val) + AMP + diphosphate. Its function is as follows. Catalyzes the attachment of valine to tRNA(Val). As ValRS can inadvertently accommodate and process structurally similar amino acids such as threonine, to avoid such errors, it has a 'posttransfer' editing activity that hydrolyzes mischarged Thr-tRNA(Val) in a tRNA-dependent manner. This is Valine--tRNA ligase (valS) from Nanoarchaeum equitans (strain Kin4-M).